Consider the following 464-residue polypeptide: MGKRLLDKLWERHVVTTNENGLDLLYIDLHLVHEVTSPQAFEGLRLTNRTVRRPDLTFATMDHNIPTKDVWNITDRIAKQQLDTLRENCKQFQVPLADIGDEEQGIVHVIGPELGLTQPGKTIVCGDSHTATHGAFGALAFGIGTSEVEHVLATQTLWQRKPKAMGIELKGKLQKGVYAKDIILHLLSKYGVAVGTGYVMEFYGETIESMEMEERMTLCNMAIEGGAKAGIIAPDEKTFAYVKGRKYAPKDYETFEKKWSEFYTDVDAMYDLHILIDVTDLAPYVTWGTNPSMGVRIDERLPEKNDVNDERAFSYMGLSPGQSTYDIPVQHVFIGSCTNSRLSDLEIAASVVKGKKVKEGVRALVVPGSKRVREAAMQKGLHRIFEEAGFEWREPGCSMCLGMNPDQVPEGEHCASTSNRNFEGRQGKGARTHLVSPAMAAAAALYGHFVDTRKESYDGAISYS.

Cysteine 337, cysteine 397, and cysteine 400 together coordinate [4Fe-4S] cluster.

It belongs to the aconitase/IPM isomerase family. LeuC type 1 subfamily. In terms of assembly, heterodimer of LeuC and LeuD. The cofactor is [4Fe-4S] cluster.

It carries out the reaction (2R,3S)-3-isopropylmalate = (2S)-2-isopropylmalate. It functions in the pathway amino-acid biosynthesis; L-leucine biosynthesis; L-leucine from 3-methyl-2-oxobutanoate: step 2/4. Catalyzes the isomerization between 2-isopropylmalate and 3-isopropylmalate, via the formation of 2-isopropylmaleate. This chain is 3-isopropylmalate dehydratase large subunit, found in Bacillus thuringiensis (strain Al Hakam).